We begin with the raw amino-acid sequence, 777 residues long: Protein argonaute (777 aa).

Positions 1-107 are N-terminal domain; sequence MAPVQAADEM…ARLDDALEEA (107 aa). A linker L1 region spans residues 108 to 182; it reads LPKYAAVKKR…TIGMRYDIEA (75 aa). Positions 183–243 are PAZ domain; it reads SLRDLLEAGI…VNVNDAKLEG (61 aa). Positions 244–341 are linker L2; sequence SKENFTRCLS…DRTGAKSAEY (98 aa). The interval 342–509 is mid domain; it reads AWRGLSQFGP…SIATYAKLNG (168 aa). In terms of domain architecture, Piwi spans 445 to 757; the sequence is GIVVLFEDHA…IAELLGRLKS (313 aa). The PIWI domain stretch occupies residues 510–777; the sequence is TPWTVNHDKA…IKLKWSRWFL (268 aa). Leu-777 contacts Mg(2+).

It belongs to the argonaute family. Long pAgo subfamily. Mg(2+) is required as a cofactor.

In terms of biological role, a catalytically inactive argonaute protein. Binds 5'-phosphorylated RNA as the guide (gRNA) and short DNA as target DNA (tDNA); does not bind other nucleic acid combinations, does not bind tDNA alone. Has highest affinity for gRNA that begins with 5'-phospho-U and poor affinity for gRNA with 5'-OH. Upon expression in E.coli, plasmid sequences are found in RsAgo, its induction leads to plasmid degradation and suppression of genes encoded on foreign plasmids, suggesting it may also interfere with transcription. Does not interact with preformed gRNA:tDNA duplexes. Mismatches and nt bulges are tolerated in the ternary complex, however, they significantly reduce the affinity of RsAgo:gRNA for tDNA. Mismatched tDNA can cause dissociation of gRNA from RsAgo. In situ binds 2 populations of RNA (15-19 and 45 nucleotides, nt) and a population of ssDNA 22-24 nt in length. The small sense RNA is probably derived from mRNA degradation and strongly enriched for U in the first and U/C in the second positions. The small DNA is enriched for sequences complementary to the RNA, with 3 nt overhangs on both ends; another nuclease may trim the ends. The sequences are largely derived from exogenous plasmids or genome-encoded foreign elements such as prophages and transposons. Forms a ternary complex with gRNA and double-stranded tDNA only when the tDNA is open. This is Protein argonaute from Cereibacter sphaeroides (strain ATCC 17025 / ATH 2.4.3) (Rhodobacter sphaeroides).